Reading from the N-terminus, the 121-residue chain is Small ribosomal subunit protein uS13 (121 aa).

Residues 92–121 (RKGLPCRGQRTRTNARTRKGPRKAAQSLKK) are disordered.

It belongs to the universal ribosomal protein uS13 family. Part of the 30S ribosomal subunit. Forms a loose heterodimer with protein S19. Forms two bridges to the 50S subunit in the 70S ribosome.

Located at the top of the head of the 30S subunit, it contacts several helices of the 16S rRNA. In the 70S ribosome it contacts the 23S rRNA (bridge B1a) and protein L5 of the 50S subunit (bridge B1b), connecting the 2 subunits; these bridges are implicated in subunit movement. Contacts the tRNAs in the A and P-sites. The polypeptide is Small ribosomal subunit protein uS13 (Janthinobacterium sp. (strain Marseille) (Minibacterium massiliensis)).